The following is a 352-amino-acid chain: Galactokinase (352 aa).

Substrate is bound at residue 17-20 (EHTD). Residues S49 and 101–107 (GAGLSSS) each bind ATP. Mg(2+)-binding residues include S107 and E139. Residue D151 is the Proton acceptor of the active site. Y200 contributes to the substrate binding site.

This sequence belongs to the GHMP kinase family. GalK subfamily. In terms of assembly, monomer.

It is found in the cytoplasm. The catalysed reaction is alpha-D-galactose + ATP = alpha-D-galactose 1-phosphate + ADP + H(+). The protein operates within carbohydrate metabolism; galactose metabolism. In terms of biological role, catalyzes the transfer of the gamma-phosphate of ATP to D-galactose to form alpha-D-galactose-1-phosphate (Gal-1-P). Is very specific for its substrate, since it is not able to use D-glucose, D-fructose, D-mannose, 2-deoxy-D-glucose, and D-glucosamine as substrates. The chain is Galactokinase from Pyrococcus furiosus (strain ATCC 43587 / DSM 3638 / JCM 8422 / Vc1).